The sequence spans 247 residues: Ribosomal RNA small subunit methyltransferase G (247 aa).

Residues glycine 84, phenylalanine 89, 136–137 (AE), and arginine 155 contribute to the S-adenosyl-L-methionine site.

Belongs to the methyltransferase superfamily. RNA methyltransferase RsmG family.

The protein localises to the cytoplasm. Functionally, specifically methylates the N7 position of a guanine in 16S rRNA. This chain is Ribosomal RNA small subunit methyltransferase G, found in Prochlorococcus marinus (strain MIT 9313).